A 316-amino-acid chain; its full sequence is Exonuclease DPD1, chloroplastic/mitochondrial (316 aa).

Residues 1-63 (MCISISQVSR…NVSTTTQGSR (63 aa)) constitute a chloroplast and mitochondrion transit peptide. In terms of domain architecture, Exonuclease spans 112-282 (IVSDLETTGL…SDVLLLSKVF (171 aa)). 2 residues coordinate Mg(2+): Asp115 and Glu117. His269 functions as the Proton donor/acceptor in the catalytic mechanism. Asp274 lines the Mg(2+) pocket.

This sequence belongs to the exonuclease superfamily. TREX family. Mg(2+) serves as cofactor. Highly expressed in mature pollen grains. Detected in flowers, senescing leaves and roots.

It is found in the plastid. The protein resides in the chloroplast. Its subcellular location is the mitochondrion. With respect to regulation, inhibited by free nucleotide diphosphates (NDPs). Functionally, exonuclease required for organelle DNA degradation during pollen development. Plays non-essential roles in maternal inheritance. May be part of the DNA salvage machinery. This is Exonuclease DPD1, chloroplastic/mitochondrial from Arabidopsis thaliana (Mouse-ear cress).